We begin with the raw amino-acid sequence, 210 residues long: Oxygen-insensitive NADPH nitroreductase (210 aa).

Residue 150 to 155 coordinates NADP(+); it reads GVSLMG.

The protein belongs to the nitroreductase family.

Reduction of a variety of nitroaromatic compounds using NADPH as source of reducing equivalents; two electrons are transferred. In Helicobacter acinonychis (strain Sheeba), this protein is Oxygen-insensitive NADPH nitroreductase (rdxA).